Consider the following 199-residue polypeptide: Large ribosomal subunit protein bL25 (199 aa).

Belongs to the bacterial ribosomal protein bL25 family. CTC subfamily. Part of the 50S ribosomal subunit; part of the 5S rRNA/L5/L18/L25 subcomplex. Contacts the 5S rRNA. Binds to the 5S rRNA independently of L5 and L18.

In terms of biological role, this is one of the proteins that binds to the 5S RNA in the ribosome where it forms part of the central protuberance. This Caulobacter sp. (strain K31) protein is Large ribosomal subunit protein bL25.